The chain runs to 323 residues: o-succinylbenzoate synthase (323 aa).

The active-site Proton donor is the lysine 134. Aspartate 162, glutamate 191, and aspartate 214 together coordinate Mg(2+). Catalysis depends on lysine 236, which acts as the Proton acceptor.

It belongs to the mandelate racemase/muconate lactonizing enzyme family. MenC type 1 subfamily. A divalent metal cation serves as cofactor.

The catalysed reaction is (1R,6R)-6-hydroxy-2-succinyl-cyclohexa-2,4-diene-1-carboxylate = 2-succinylbenzoate + H2O. It participates in quinol/quinone metabolism; 1,4-dihydroxy-2-naphthoate biosynthesis; 1,4-dihydroxy-2-naphthoate from chorismate: step 4/7. The protein operates within quinol/quinone metabolism; menaquinone biosynthesis. Its function is as follows. Converts 2-succinyl-6-hydroxy-2,4-cyclohexadiene-1-carboxylate (SHCHC) to 2-succinylbenzoate (OSB). This chain is o-succinylbenzoate synthase, found in Yersinia pseudotuberculosis serotype O:1b (strain IP 31758).